The chain runs to 383 residues: Acetylornithine deacetylase (383 aa).

A Zn(2+)-binding site is contributed by H80. Residue D82 is part of the active site. D112 is a binding site for Zn(2+). Residue E144 is part of the active site. The Zn(2+) site is built by E145, E169, and H355.

The protein belongs to the peptidase M20A family. ArgE subfamily. As to quaternary structure, homodimer. Requires Zn(2+) as cofactor. The cofactor is Co(2+). Glutathione serves as cofactor.

The protein resides in the cytoplasm. It catalyses the reaction N(2)-acetyl-L-ornithine + H2O = L-ornithine + acetate. It participates in amino-acid biosynthesis; L-arginine biosynthesis; L-ornithine from N(2)-acetyl-L-ornithine (linear): step 1/1. Catalyzes the hydrolysis of the amide bond of N(2)-acetylated L-amino acids. Cleaves the acetyl group from N-acetyl-L-ornithine to form L-ornithine, an intermediate in L-arginine biosynthesis pathway, and a branchpoint in the synthesis of polyamines. The sequence is that of Acetylornithine deacetylase from Shigella dysenteriae serotype 1 (strain Sd197).